The sequence spans 239 residues: Uridylate kinase (239 aa).

12–15 (KLSG) lines the ATP pocket. The segment at 20-25 (GDQGYG) is involved in allosteric activation by GTP. Residue glycine 54 participates in UMP binding. Positions 55 and 59 each coordinate ATP. UMP contacts are provided by residues aspartate 74 and 135 to 142 (TGNPYFTT). ATP is bound by residues threonine 162, tyrosine 168, and aspartate 171.

The protein belongs to the UMP kinase family. In terms of assembly, homohexamer.

It is found in the cytoplasm. The enzyme catalyses UMP + ATP = UDP + ADP. It functions in the pathway pyrimidine metabolism; CTP biosynthesis via de novo pathway; UDP from UMP (UMPK route): step 1/1. Allosterically activated by GTP. Inhibited by UTP. Catalyzes the reversible phosphorylation of UMP to UDP. The polypeptide is Uridylate kinase (Geobacter metallireducens (strain ATCC 53774 / DSM 7210 / GS-15)).